The chain runs to 1220 residues: DNA-directed RNA polymerase subunit beta' (1220 aa).

The Zn(2+) site is built by Cys60, Cys62, Cys75, and Cys78. The Mg(2+) site is built by Asp449, Asp451, and Asp453. Zn(2+) contacts are provided by Cys818, Cys892, Cys899, and Cys902.

This sequence belongs to the RNA polymerase beta' chain family. In terms of assembly, the RNAP catalytic core consists of 2 alpha, 1 beta, 1 beta' and 1 omega subunit. When a sigma factor is associated with the core the holoenzyme is formed, which can initiate transcription. It depends on Mg(2+) as a cofactor. Zn(2+) is required as a cofactor.

It catalyses the reaction RNA(n) + a ribonucleoside 5'-triphosphate = RNA(n+1) + diphosphate. DNA-dependent RNA polymerase catalyzes the transcription of DNA into RNA using the four ribonucleoside triphosphates as substrates. The polypeptide is DNA-directed RNA polymerase subunit beta' (Lacticaseibacillus paracasei (strain ATCC 334 / BCRC 17002 / CCUG 31169 / CIP 107868 / KCTC 3260 / NRRL B-441) (Lactobacillus paracasei)).